The sequence spans 399 residues: Elongation factor Tu (399 aa).

One can recognise a tr-type G domain in the interval 10 to 209; it reads KPHVNVGTIG…EVDKYIPTPQ (200 aa). The segment at 19-26 is G1; that stretch reads GHVDHGKT. Residue 19-26 participates in GTP binding; that stretch reads GHVDHGKT. Residue Thr-26 participates in Mg(2+) binding. Residues 60-64 form a G2 region; sequence GITIA. Positions 81–84 are G3; that stretch reads DCPG. GTP contacts are provided by residues 81–85 and 136–139; these read DCPGH and NKQD. The G4 stretch occupies residues 136–139; the sequence is NKQD. The interval 174-176 is G5; sequence SAL.

This sequence belongs to the TRAFAC class translation factor GTPase superfamily. Classic translation factor GTPase family. EF-Tu/EF-1A subfamily. As to quaternary structure, monomer.

It is found in the cytoplasm. The enzyme catalyses GTP + H2O = GDP + phosphate + H(+). Its function is as follows. GTP hydrolase that promotes the GTP-dependent binding of aminoacyl-tRNA to the A-site of ribosomes during protein biosynthesis. This chain is Elongation factor Tu, found in Helicobacter hepaticus (strain ATCC 51449 / 3B1).